We begin with the raw amino-acid sequence, 307 residues long: Lipid droplet-associated hydrolase (307 aa).

The active-site Nucleophile is S119. A potential amphipathic helix required for binding to lipid droplets region spans residues 157 to 200 (GWVFTKVAMPLYSVFGYIFFSFFNFLPVWLRLMLIQIYFLIFSI). Helical transmembrane passes span 166–186 (PLYS…PVWL) and 188–208 (LMLI…LGTA). Catalysis depends on charge relay system residues D254 and H283.

This sequence belongs to the AB hydrolase superfamily. LDAH family. As to quaternary structure, interacts with the juvenile hormone hydrolase enzymes Jheh1 and Jheh2. Also interacts with Hmu, Cpr, Gp93 and Pvr. In terms of tissue distribution, expressed in accessory glands.

It localises to the lipid droplet. It is found in the endoplasmic reticulum membrane. The catalysed reaction is a cholesterol ester + H2O = cholesterol + a fatty acid + H(+). Functionally, probable serine lipid hydrolase associated with lipid droplets. Appears to lack or have very low cholesterol esterase activity. Appears to lack triglyceride lipase activity. Involved in cholesterol and triglyceride homeostasis; stimulates cellular triglyceride accumulation and cellular cholesterol release. Involved in negatively regulating juvenile hormone (JH) and possibly, insulin signaling activities such as triacylglycerols (TAG) storage, and thereby plays a role in the endocrine regulation of organismal growth and survival. Likely functions by enhancing the activity of the JH hydrolase enzymes Jheh1 and Jheh2. Required for lipid droplet positioning and fat storage. The chain is Lipid droplet-associated hydrolase from Drosophila melanogaster (Fruit fly).